We begin with the raw amino-acid sequence, 949 residues long: ATPase 6, plasma membrane-type (949 aa).

The Cytoplasmic segment spans residues 1–64 (MAADISWDEI…EKVENKFLKF (64 aa)). A helical transmembrane segment spans residues 65–84 (LGFMWNPLSWVMEAAAIMAI). The Extracellular segment spans residues 85–96 (VLANGGGRPPDW). The chain crosses the membrane as a helical span at residues 97 to 117 (QDFVGITCLLIINSTISFIEE). Over 118-246 (NNAGNAAAAL…GHFQKVLTAI (129 aa)) the chain is Cytoplasmic. A helical membrane pass occupies residues 247–267 (GNFCICSIGIGMLIEIIIMYP). Over 268–276 (IQHRKYRDG) the chain is Extracellular. A helical transmembrane segment spans residues 277–294 (IDNLLVLLIGGIPIAMPT). At 295-645 (VLSVTMAIGS…TSRAIFQRMK (351 aa)) the chain is on the cytoplasmic side. Aspartate 332 functions as the 4-aspartylphosphate intermediate in the catalytic mechanism. Mg(2+) is bound by residues aspartate 590 and aspartate 594. Residues 646–667 (NYTIYAVSITIRIVLGFMLVAL) traverse the membrane as a helical segment. The Extracellular segment spans residues 668–672 (IWEFD). Residues 673-695 (FSPFMVLIIAILNDGTIMTISKD) traverse the membrane as a helical segment. Over 696–711 (RVKPSPIPDSWKLKEI) the chain is Cytoplasmic. A helical transmembrane segment spans residues 712–732 (FATGVVLGTYMALVTVVFFWL). Topologically, residues 733–753 (AHDTTFFSDKFGVRSLQGKDE) are extracellular. Residues 754–774 (ELIAVLYLQVSIISQALIFVT) traverse the membrane as a helical segment. Residues 775–786 (RSRSWSFVERPG) lie on the Cytoplasmic side of the membrane. Residues 787-807 (LLLLIAFFVAQLIATLIATYA) traverse the membrane as a helical segment. Residues 808 to 815 (HWEFARIK) lie on the Extracellular side of the membrane. The chain crosses the membrane as a helical span at residues 816–836 (GCGWGWCGVIWIYSIVTYIPL). Over 837 to 949 (DILKFITRYT…IDNLNQHYTV (113 aa)) the chain is Cytoplasmic. The residue at position 883 (threonine 883) is a Phosphothreonine. Residue serine 931 is modified to Phosphoserine. The interaction with 14-3-3 proteins stretch occupies residues 947–949 (YTV). At threonine 948 the chain carries Phosphothreonine.

Belongs to the cation transport ATPase (P-type) (TC 3.A.3) family. Type IIIA subfamily. In terms of assembly, binds to 14-3-3 proteins. The binding is induced by phosphorylation of Thr-948. Binding to 14-3-3 proteins activates the H(+)-ATPase. In terms of tissue distribution, expressed in guard cells.

It localises to the membrane. It carries out the reaction ATP + H2O + H(+)(in) = ADP + phosphate + 2 H(+)(out). Its function is as follows. The plasma membrane H(+) ATPase of plants and fungi generates a proton gradient that drives the active transport of nutrients by H(+)-symport. The resulting external acidification and/or internal alkinization may mediate growth responses. The protein is ATPase 6, plasma membrane-type (AHA6) of Arabidopsis thaliana (Mouse-ear cress).